The following is a 396-amino-acid chain: Alanine racemase (396 aa).

Catalysis depends on Lys46, which acts as the Proton acceptor; specific for D-alanine. Lys46 carries the post-translational modification N6-(pyridoxal phosphate)lysine. A substrate-binding site is contributed by Arg145. Tyr280 serves as the catalytic Proton acceptor; specific for L-alanine. Residue Met328 participates in substrate binding.

The protein belongs to the alanine racemase family. Requires pyridoxal 5'-phosphate as cofactor.

It catalyses the reaction L-alanine = D-alanine. Its pathway is amino-acid biosynthesis; D-alanine biosynthesis; D-alanine from L-alanine: step 1/1. Catalyzes the interconversion of L-alanine and D-alanine. May also act on other amino acids. This is Alanine racemase (alr) from Brucella canis (strain ATCC 23365 / NCTC 10854 / RM-666).